The following is a 608-amino-acid chain: Chaperone protein DnaK (608 aa).

Residue T175 is modified to Phosphothreonine; by autocatalysis.

It belongs to the heat shock protein 70 family.

Acts as a chaperone. The polypeptide is Chaperone protein DnaK (Finegoldia magna (strain ATCC 29328 / DSM 20472 / WAL 2508) (Peptostreptococcus magnus)).